Here is a 570-residue protein sequence, read N- to C-terminus: Proline--tRNA ligase (570 aa).

Belongs to the class-II aminoacyl-tRNA synthetase family. ProS type 1 subfamily. Homodimer.

The protein resides in the cytoplasm. It catalyses the reaction tRNA(Pro) + L-proline + ATP = L-prolyl-tRNA(Pro) + AMP + diphosphate. In terms of biological role, catalyzes the attachment of proline to tRNA(Pro) in a two-step reaction: proline is first activated by ATP to form Pro-AMP and then transferred to the acceptor end of tRNA(Pro). As ProRS can inadvertently accommodate and process non-cognate amino acids such as alanine and cysteine, to avoid such errors it has two additional distinct editing activities against alanine. One activity is designated as 'pretransfer' editing and involves the tRNA(Pro)-independent hydrolysis of activated Ala-AMP. The other activity is designated 'posttransfer' editing and involves deacylation of mischarged Ala-tRNA(Pro). The misacylated Cys-tRNA(Pro) is not edited by ProRS. This chain is Proline--tRNA ligase, found in Shewanella sp. (strain ANA-3).